The chain runs to 72 residues: MYRWCMSRTNIDIDDELAAEVMRRFGLTTKRAAVDLALRRLVGSPLSREFLLGLEGVGWEGDLDDLRSDRPD.

In terms of biological role, antitoxin component of a type II toxin-antitoxin (TA) system. This chain is Antitoxin VapB11 (vapB11), found in Mycobacterium tuberculosis (strain CDC 1551 / Oshkosh).